Here is a 34-residue protein sequence, read N- to C-terminus: Photosystem I reaction center subunit XII (34 aa).

Residues 5-25 (ISSPEIFIALVVAAHAAILAL) form a helical membrane-spanning segment.

This sequence belongs to the PsaM family.

Its subcellular location is the cellular thylakoid membrane. In Synechococcus sp. (strain CC9902), this protein is Photosystem I reaction center subunit XII.